The primary structure comprises 409 residues: Histidine--tRNA ligase (409 aa).

It belongs to the class-II aminoacyl-tRNA synthetase family.

It is found in the cytoplasm. The enzyme catalyses tRNA(His) + L-histidine + ATP = L-histidyl-tRNA(His) + AMP + diphosphate + H(+). The protein is Histidine--tRNA ligase (hisS) of Archaeoglobus fulgidus (strain ATCC 49558 / DSM 4304 / JCM 9628 / NBRC 100126 / VC-16).